A 221-amino-acid chain; its full sequence is uncharacterized protein (221 aa).

The interval 40 to 162 (TIEVEPSPVQ…EPPEKVELSP (123 aa)) is disordered. A compositionally biased stretch (polar residues) spans 47 to 60 (PVQQDNPPISSEQA). Residues 82–92 (SSAQQEATAQT) are compositionally biased toward low complexity.

This is an uncharacterized protein from Homo sapiens (Human).